The sequence spans 187 residues: UPF0301 protein PMI0339 (187 aa).

The protein belongs to the UPF0301 (AlgH) family.

This chain is UPF0301 protein PMI0339, found in Proteus mirabilis (strain HI4320).